A 497-amino-acid chain; its full sequence is Probable D-lactate dehydrogenase, mitochondrial (497 aa).

The FAD-binding PCMH-type domain maps to 65-246 (HRCRPPDVVV…TKATLRLYGV (182 aa)).

It belongs to the FAD-binding oxidoreductase/transferase type 4 family. Requires FAD as cofactor.

It localises to the mitochondrion. The catalysed reaction is (R)-lactate + 2 Fe(III)-[cytochrome c] = 2 Fe(II)-[cytochrome c] + pyruvate + 2 H(+). In terms of biological role, involved in D-lactate, but not L-lactate catabolic process. The sequence is that of Probable D-lactate dehydrogenase, mitochondrial (ldhd) from Danio rerio (Zebrafish).